The primary structure comprises 473 residues: MSLAQLEHALQHDLQRLAHGGEPWVRPRVHPAGHVYDVVIVGAGQSGLGAAFALQRERVHNVLVIDENPPGQEGPWVTYARMQTLRTPKQITSIDLGVPTLTFRAWWEAQHGAAGWDALDKIPRGTWMDYLRWYRAALRLPVRNATQLVRIEPDAAPGIHRLHLAMGAPLMARKIILATGIQGGGQWQVPEWITQALPAQRYAHTSGPIDYAALAGKRVGILGGGASAFDNACFALDQGVARAEVFVRRAALPRVNPIRHMEQAGIIPRFAALPDADKYRMMASFFGRNQPPTNDTFQRACAHAGFALHLDAPWLGVEEHNDVVVVRTPQGEHRFDFLAIATGLVTDPRLRPELAALSGRIACWADRYQAPPGQANPVLDAHPYLGPGFELLPRTPDDAAAVDGLFAFNYSALINHGLSAAALSGLKVALPRLARAVADQLFLDDRQAMVEAYLGYDQAEFVGQWPQPTQAVA.

The protein belongs to the HpyO family. In terms of assembly, homodimer. Requires FAD as cofactor.

The enzyme catalyses urate + NADH + O2 + H(+) = 5-hydroxyisourate + NAD(+) + H2O. The catalysed reaction is urate + NADPH + O2 + H(+) = 5-hydroxyisourate + NADP(+) + H2O. Its pathway is purine metabolism; urate degradation. Functionally, catalyzes the hydroxylation of urate to 5-hydroxyisourate (HIU). Is likely to be involved in the urate degradation pathway to allantoin. Is slightly more efficient (about 2.6 times) with NADPH than NADH as the electron donor. The polypeptide is FAD-dependent urate hydroxylase (Xanthomonas campestris pv. campestris (strain ATCC 33913 / DSM 3586 / NCPPB 528 / LMG 568 / P 25)).